The sequence spans 479 residues: 5-hydroxytryptamine receptor 2B (479 aa).

Topologically, residues 1-55 are extracellular; that stretch reads MASSYKMSEQSTISEHILQKTCDHLILTDRSGLKAESAAEEMKQTAENQGNTVHW. The helical transmembrane segment at 56–78 threads the bilayer; that stretch reads AALLIFAVIIPTIGGNILVILAV. Residues 79–89 lie on the Cytoplasmic side of the membrane; the sequence is SLEKRLQYATN. The chain crosses the membrane as a helical span at residues 90-112; the sequence is YFLMSLAVADLLVGLFVMPIALL. At 113–128 the chain is on the extracellular side; the sequence is TIMFEATWPLPLALCP. Cysteine 127 and cysteine 206 are oxidised to a cystine. Residues 129–150 form a helical membrane-spanning segment; that stretch reads AWLFLDVLFSTASIMHLCAISL. Positions 134 and 139 each coordinate ergotamine. A DRY motif; important for ligand-induced conformation changes motif is present at residues 151-153; sequence DRY. The Cytoplasmic segment spans residues 151-170; it reads DRYIAIKKPIQANQCNSRTT. Residues 171-191 form a helical membrane-spanning segment; it reads AFVKITVVWLISIGIAIPVPI. Topologically, residues 192 to 215 are extracellular; it reads KGIEADVVNAHNITCELTKDRFGS. N-linked (GlcNAc...) asparagine glycosylation is present at asparagine 203. Leucine 208 is a binding site for ergotamine. The [DE]RFG motif; may stabilize a conformation that preferentially activates signaling via beta-arrestin family members motif lies at 211 to 214; the sequence is DRFG. A helical transmembrane segment spans residues 216–238; it reads FMLFGSLAAFFAPLTIMIVTYFL. The Cytoplasmic portion of the chain corresponds to 239–323; the sequence is TIHALRKKAY…TISNEQRASK (85 aa). The helical transmembrane segment at 324–344 threads the bilayer; sequence VLGIVFLFFLLMWCPFFITNV. Topologically, residues 345–359 are extracellular; the sequence is TLALCDSCNQTTLKT. Cysteine 349 and cysteine 352 are oxidised to a cystine. Asparagine 353 carries an N-linked (GlcNAc...) asparagine glycan. Residues 360–381 traverse the membrane as a helical segment; it reads LLQIFVWVGYVSSGVNPLIYTL. The NPxxY motif; important for ligand-induced conformation changes and signaling motif lies at 375–379; that stretch reads NPLIY. Residues 382-479 are Cytoplasmic-facing; the sequence is FNKTFREAFG…DKVEDQVSYI (98 aa). Cysteine 396 carries the S-palmitoyl cysteine lipid modification. A PDZ-binding motif is present at residues 477–479; it reads SYI.

The protein belongs to the G-protein coupled receptor 1 family. Interacts (via C-terminus) with MPDZ. In terms of tissue distribution, stomach fundus.

It is found in the cell membrane. The protein localises to the synapse. The protein resides in the synaptosome. G-protein coupled receptor for 5-hydroxytryptamine (serotonin). Also functions as a receptor for various ergot alkaloid derivatives and psychoactive substances. Ligand binding causes a conformation change that triggers signaling via guanine nucleotide-binding proteins (G proteins) and modulates the activity of downstream effectors. HTR2B is coupled to G(q)/G(11) G alpha proteins and activates phospholipase C-beta, releasing diacylglycerol (DAG) and inositol 1,4,5-trisphosphate (IP3) second messengers that modulate the activity of phosphatidylinositol 3-kinase and promote the release of Ca(2+) ions from intracellular stores, respectively. Beta-arrestin family members inhibit signaling via G proteins and mediate activation of alternative signaling pathways. Plays a role in the regulation of dopamine and 5-hydroxytryptamine release, 5-hydroxytryptamine uptake and in the regulation of extracellular dopamine and 5-hydroxytryptamine levels, and thereby affects neural activity. May play a role in the perception of pain. Plays a role in the regulation of behavior, including impulsive behavior. Required for normal proliferation of embryonic cardiac myocytes and normal heart development. Protects cardiomyocytes against apoptosis. Plays a role in the adaptation of pulmonary arteries to chronic hypoxia. Plays a role in vasoconstriction. Required for normal osteoblast function and proliferation, and for maintaining normal bone density. Required for normal proliferation of the interstitial cells of Cajal in the intestine. The protein is 5-hydroxytryptamine receptor 2B (Htr2b) of Rattus norvegicus (Rat).